The following is a 307-amino-acid chain: Protease HtpX homolog (307 aa).

Residues 16-36 traverse the membrane as a helical segment; that stretch reads LFMGVGYLIGGAAGAMIALVV. Histidine 130 contributes to the Zn(2+) binding site. Glutamate 131 is a catalytic residue. Zn(2+) is bound at residue histidine 134. 2 helical membrane passes run 145–165 and 172–192; these read ITAT…FFGG and GPGI…AMLV. Glutamate 201 is a binding site for Zn(2+). The disordered stretch occupies residues 278–307; that stretch reads AGQSGSATPDPAPAPRGPWNGGAPRRGPWG.

Belongs to the peptidase M48B family. The cofactor is Zn(2+).

Its subcellular location is the cell inner membrane. This Nitrobacter hamburgensis (strain DSM 10229 / NCIMB 13809 / X14) protein is Protease HtpX homolog.